Consider the following 220-residue polypeptide: Response regulator protein TmoT (220 aa).

The region spanning 21-135 (VIYIVDDDNA…DLLGAIRTAL (115 aa)) is the Response regulatory domain. Asp-70 is modified (4-aspartylphosphate). The 66-residue stretch at 151–216 (LKASYESLSK…DLVRVTERLK (66 aa)) folds into the HTH luxR-type domain. A DNA-binding region (H-T-H motif) is located at residues 175-194 (NKQTALELDISEATVKVHRH).

Post-translationally, phosphorylated by TmoS.

It is found in the cytoplasm. Its function is as follows. Member of the two-component regulatory system TmoS/TmoT involved in the regulation of toluene degradation. Induces expression of tmoX operon. The polypeptide is Response regulator protein TmoT (tmoT) (Ectopseudomonas mendocina (Pseudomonas mendocina)).